The following is a 574-amino-acid chain: Serine carboxypeptidase ctsa-3.1 (574 aa).

Residues 1–19 (MCRTLLGVAFLVVTVLSQG) form the signal peptide. N-linked (GlcNAc...) asparagine glycans are attached at residues N48 and N163. S172 is a catalytic residue. N241, N408, N414, and N426 each carry an N-linked (GlcNAc...) asparagine glycan. Active-site residues include D441 and H507. N-linked (GlcNAc...) asparagine glycosylation is present at N534.

It belongs to the peptidase S10 family.

The polypeptide is Serine carboxypeptidase ctsa-3.1 (Caenorhabditis elegans).